Reading from the N-terminus, the 147-residue chain is Large ribosomal subunit protein uL13 (147 aa).

This sequence belongs to the universal ribosomal protein uL13 family. In terms of assembly, part of the 50S ribosomal subunit.

Its function is as follows. This protein is one of the early assembly proteins of the 50S ribosomal subunit, although it is not seen to bind rRNA by itself. It is important during the early stages of 50S assembly. The polypeptide is Large ribosomal subunit protein uL13 (Streptomyces avermitilis (strain ATCC 31267 / DSM 46492 / JCM 5070 / NBRC 14893 / NCIMB 12804 / NRRL 8165 / MA-4680)).